A 375-amino-acid chain; its full sequence is N-acetylneuraminate epimerase (375 aa).

The N-terminal stretch at 1-22 (MKLTKTALCTALFATFTFSANA) is a signal peptide. Kelch repeat units follow at residues 43-87 (TVYV…AAVD), 89-140 (KLYV…ASHG), 142-176 (KVYI…EIVA), 177-222 (AYFD…TIQG), 225-273 (LVVV…LAGA), 295-344 (KQFK…SYNN), and 346-375 (VLLI…LTVE). Residue Glu-231 is the Proton acceptor of the active site.

It belongs to the NanM family. In terms of assembly, homodimer.

The protein localises to the periplasm. It carries out the reaction N-acetyl-alpha-neuraminate = N-acetyl-beta-neuraminate. Converts alpha-N-acetylneuranimic acid (Neu5Ac) to the beta-anomer, accelerating the equilibrium between the alpha- and beta-anomers. Probably facilitates sialidase-negative bacteria to compete successfully for limited amounts of extracellular Neu5Ac, which is likely taken up in the beta-anomer. In addition, the rapid removal of sialic acid from solution might be advantageous to the bacterium to damp down host responses. This chain is N-acetylneuraminate epimerase, found in Haemophilus influenzae (strain 86-028NP).